The sequence spans 599 residues: MTDLNRIRNFSIVAHIDHGKSTLADRLIQLTGTVAARDMQAQLLDQMDIERERGITIKANTVRIEYPAKDGHTYILNLIDTPGHVDFAYEVSRSMQAVEGSLLVVDASQGVEAQTLANVYQAIDADHEIVPVLNKVDLPAAEPDRVREQIEDVIGIDASEAVEISAKTGIGIPDVLEAIVTRLPAPKGDRDAPLKAMLVDSYYDSYLGVVVLIRVIDGVIKKGDKIKMMRTGGQYPVDRLGVFTPKMKDIGELGPGEMGFLTASIKQVRDTRVGDTITHDKHGAEQPLAGFKPSQPVVFCGLFPVDTNQFEDLRDAIEKLALNDASFSHEMETSAALGFGFRCGFLGLLHLEVIRDRLEREYDIDLITTAPSVIYHVHMRDETMVDLHNPADMPDPAAIDRIEEPRIKATILVPDDYLGDVLKLCQDRRGIQIDLTYAGTRAMVVYDLPLNEVVFDFYDRLKSVTKGYASFDYQMIGYREDALVKMQVLVNDEPVDALSIMVHRDRAETRGRAMVEKLKDLIPRHMFKIPIQAAIGGRVIARETLSAMRKDVTAKCYGGDASRKRKLLDKQKAGKKKMRQFGKVEIPQSAFISALKMDG.

The tr-type G domain occupies 5–187; that stretch reads NRIRNFSIVA…AIVTRLPAPK (183 aa). GTP contacts are provided by residues 17–22 and 134–137; these read DHGKST and NKVD.

This sequence belongs to the TRAFAC class translation factor GTPase superfamily. Classic translation factor GTPase family. LepA subfamily.

The protein resides in the cell inner membrane. The enzyme catalyses GTP + H2O = GDP + phosphate + H(+). Its function is as follows. Required for accurate and efficient protein synthesis under certain stress conditions. May act as a fidelity factor of the translation reaction, by catalyzing a one-codon backward translocation of tRNAs on improperly translocated ribosomes. Back-translocation proceeds from a post-translocation (POST) complex to a pre-translocation (PRE) complex, thus giving elongation factor G a second chance to translocate the tRNAs correctly. Binds to ribosomes in a GTP-dependent manner. The chain is Elongation factor 4 from Jannaschia sp. (strain CCS1).